A 422-amino-acid chain; its full sequence is Serine protease inhibitor A3A (422 aa).

An N-terminal signal peptide occupies residues 1–17 (MAFIAALGLLMVGICPA). N-linked (GlcNAc...) asparagine glycans are attached at residues N218, N230, and N271. An RCL region spans residues 369–394 (HTEADVITIARYNFQSAKIKAKIVKV).

Belongs to the serpin family.

The protein resides in the secreted. The sequence is that of Serine protease inhibitor A3A (Serpina3a) from Mus musculus (Mouse).